The following is a 259-amino-acid chain: MSQIHPTALISPSATIDKTATIGPYCIVGDEVTIGAHTVLHRHVVVTRLTRIGEYNQFYQFSSIGEDPQDLKYAGERTWLEIGDHNTIREACSLHRGTEQDGGLTKIGNHNLLMVNTHVAHDCLIGDHNVLANNVGVAGHVTIGNHIIVGGNSGIHQFCTIDDYSLVGGATLVLKDVAAFTMVSGNPAKAHGLNIEGMRRKGWSKDSIDVLRQAYRVVFRSGLTTVQALEVLKQDLLPKESKIEFLIDSLQKSRRGVVR.

This sequence belongs to the transferase hexapeptide repeat family. LpxA subfamily. Homotrimer.

It is found in the cytoplasm. The enzyme catalyses a (3R)-hydroxyacyl-[ACP] + UDP-N-acetyl-alpha-D-glucosamine = a UDP-3-O-[(3R)-3-hydroxyacyl]-N-acetyl-alpha-D-glucosamine + holo-[ACP]. It functions in the pathway glycolipid biosynthesis; lipid IV(A) biosynthesis; lipid IV(A) from (3R)-3-hydroxytetradecanoyl-[acyl-carrier-protein] and UDP-N-acetyl-alpha-D-glucosamine: step 1/6. Its function is as follows. Involved in the biosynthesis of lipid A, a phosphorylated glycolipid that anchors the lipopolysaccharide to the outer membrane of the cell. The sequence is that of Acyl-[acyl-carrier-protein]--UDP-N-acetylglucosamine O-acyltransferase from Psychrobacter cryohalolentis (strain ATCC BAA-1226 / DSM 17306 / VKM B-2378 / K5).